Reading from the N-terminus, the 63-residue chain is Large ribosomal subunit protein uL30 (63 aa).

This sequence belongs to the universal ribosomal protein uL30 family. In terms of assembly, part of the 50S ribosomal subunit.

In Stenotrophomonas maltophilia (strain K279a), this protein is Large ribosomal subunit protein uL30.